Reading from the N-terminus, the 159-residue chain is Protein HydD (159 aa).

It belongs to the peptidase A31 family.

The polypeptide is Protein HydD (hydD) (Wolinella succinogenes (strain ATCC 29543 / DSM 1740 / CCUG 13145 / JCM 31913 / LMG 7466 / NCTC 11488 / FDC 602W) (Vibrio succinogenes)).